Reading from the N-terminus, the 1026-residue chain is Multidrug resistance protein MdtC (1026 aa).

11 helical membrane passes run 15 to 35, 333 to 353, 360 to 380, 387 to 407, 431 to 451, 463 to 483, 528 to 548, 853 to 873, 897 to 917, 953 to 973, and 984 to 1004; these read ILIA…LPVA, EVEE…FLFL, LIPA…MYLC, LSLM…IVVL, VGFT…PLLL, FAVT…TLTP, LVGV…IAIP, LILI…LYES, LFNA…IGIV, PIMM…LSGG, and ITIV…TPVV.

This sequence belongs to the resistance-nodulation-cell division (RND) (TC 2.A.6) family. MdtC subfamily. As to quaternary structure, part of a tripartite efflux system composed of MdtA, MdtB and MdtC. MdtC forms a heteromultimer with MdtB.

The protein resides in the cell inner membrane. The chain is Multidrug resistance protein MdtC from Salmonella schwarzengrund (strain CVM19633).